A 216-amino-acid polypeptide reads, in one-letter code: DNA gyrase subunit B (216 aa).

The Toprim domain occupies 140–216 (SELYLVEGDS…PDKLRYHKII (77 aa)).

It belongs to the type II topoisomerase GyrB family. As to quaternary structure, heterotetramer, composed of two GyrA and two GyrB chains. In the heterotetramer, GyrA contains the active site tyrosine that forms a transient covalent intermediate with DNA, while GyrB binds cofactors and catalyzes ATP hydrolysis.

The protein localises to the cytoplasm. It catalyses the reaction ATP-dependent breakage, passage and rejoining of double-stranded DNA.. A type II topoisomerase that negatively supercoils closed circular double-stranded (ds) DNA in an ATP-dependent manner to modulate DNA topology and maintain chromosomes in an underwound state. Negative supercoiling favors strand separation, and DNA replication, transcription, recombination and repair, all of which involve strand separation. Also able to catalyze the interconversion of other topological isomers of dsDNA rings, including catenanes and knotted rings. Type II topoisomerases break and join 2 DNA strands simultaneously in an ATP-dependent manner. This Acinetobacter sp. (strain ATCC 33308 / BD413 ErpE27) protein is DNA gyrase subunit B (gyrB).